The sequence spans 215 residues: Glycerol-3-phosphate acyltransferase (215 aa).

Transmembrane regions (helical) follow at residues 14-34, 63-83, 92-112, 128-148, and 154-174; these read SSSA…AVVV, TAAA…LWLA, WGAY…PLFL, MAIE…VAVF, and LAAL…SGAA.

This sequence belongs to the PlsY family. Probably interacts with PlsX.

The protein localises to the cell inner membrane. It catalyses the reaction an acyl phosphate + sn-glycerol 3-phosphate = a 1-acyl-sn-glycero-3-phosphate + phosphate. It participates in lipid metabolism; phospholipid metabolism. Catalyzes the transfer of an acyl group from acyl-phosphate (acyl-PO(4)) to glycerol-3-phosphate (G3P) to form lysophosphatidic acid (LPA). This enzyme utilizes acyl-phosphate as fatty acyl donor, but not acyl-CoA or acyl-ACP. The polypeptide is Glycerol-3-phosphate acyltransferase (Bordetella bronchiseptica (strain ATCC BAA-588 / NCTC 13252 / RB50) (Alcaligenes bronchisepticus)).